The primary structure comprises 74 residues: Protein krueppel (74 aa).

4 C2H2-type zinc fingers span residues 1–4, 10–32, 38–60, and 66–74; these read ERTH, FECP…MRLH, YHCS…LRVH, and YTCEICDGK.

This sequence belongs to the krueppel C2H2-type zinc-finger protein family.

The protein resides in the nucleus. Functionally, krueppel is a gap class segmentation protein. The chain is Protein krueppel (Kr) from Musca domestica (House fly).